Here is a 602-residue protein sequence, read N- to C-terminus: Elongation factor 4 (602 aa).

Residues 8-190 (DLIRNFSIVA…AIVHRLPPPK (183 aa)) form the tr-type G domain. GTP-binding positions include 20 to 25 (DHGKST) and 137 to 140 (NKID).

Belongs to the TRAFAC class translation factor GTPase superfamily. Classic translation factor GTPase family. LepA subfamily.

The protein resides in the cell inner membrane. The catalysed reaction is GTP + H2O = GDP + phosphate + H(+). In terms of biological role, required for accurate and efficient protein synthesis under certain stress conditions. May act as a fidelity factor of the translation reaction, by catalyzing a one-codon backward translocation of tRNAs on improperly translocated ribosomes. Back-translocation proceeds from a post-translocation (POST) complex to a pre-translocation (PRE) complex, thus giving elongation factor G a second chance to translocate the tRNAs correctly. Binds to ribosomes in a GTP-dependent manner. The sequence is that of Elongation factor 4 from Cereibacter sphaeroides (strain ATCC 17029 / ATH 2.4.9) (Rhodobacter sphaeroides).